The primary structure comprises 65 residues: Probable tautomerase RSp1151 (65 aa).

Catalysis depends on Pro-2, which acts as the Proton acceptor; via imino nitrogen.

The protein belongs to the 4-oxalocrotonate tautomerase family.

The chain is Probable tautomerase RSp1151 from Ralstonia nicotianae (strain ATCC BAA-1114 / GMI1000) (Ralstonia solanacearum).